Reading from the N-terminus, the 375-residue chain is Chaperone protein DnaJ (375 aa).

The J domain occupies 5–70; it reads DFYEVLGVEK…QKRAQYDQFG (66 aa). The segment at 134–216 adopts a CR-type zinc-finger fold; sequence GVEKEVSITK…CKGKGTVRKQ (83 aa). Cys-147, Cys-150, Cys-164, Cys-167, Cys-190, Cys-193, Cys-204, and Cys-207 together coordinate Zn(2+). CXXCXGXG motif repeat units lie at residues 147-154, 164-171, 190-197, and 204-211; these read CETCTGTG, CPKCNGSG, CDMCGGKG, and CSDCKGKG.

Belongs to the DnaJ family. In terms of assembly, homodimer. Zn(2+) is required as a cofactor.

Its subcellular location is the cytoplasm. In terms of biological role, participates actively in the response to hyperosmotic and heat shock by preventing the aggregation of stress-denatured proteins and by disaggregating proteins, also in an autonomous, DnaK-independent fashion. Unfolded proteins bind initially to DnaJ; upon interaction with the DnaJ-bound protein, DnaK hydrolyzes its bound ATP, resulting in the formation of a stable complex. GrpE releases ADP from DnaK; ATP binding to DnaK triggers the release of the substrate protein, thus completing the reaction cycle. Several rounds of ATP-dependent interactions between DnaJ, DnaK and GrpE are required for fully efficient folding. Also involved, together with DnaK and GrpE, in the DNA replication of plasmids through activation of initiation proteins. The sequence is that of Chaperone protein DnaJ from Clostridium tetani (strain Massachusetts / E88).